The primary structure comprises 528 residues: Autophagy-related protein 22 (528 aa).

At 1–98 (MSYGTINDMN…IFVDTSSFAL (98 aa)) the chain is on the cytoplasmic side. A helical transmembrane segment spans residues 99-119 (YVFSLSVLFQTIIVISVSGIV). The Vacuolar portion of the chain corresponds to 120–130 (DLWGSVKFKGR). A helical membrane pass occupies residues 131–151 (ILVWFGIVGALSTVAISKLND). Topologically, residues 152 to 153 (TQ) are cytoplasmic. The helical transmembrane segment at 154 to 174 (IYSLAGLYIVANGCFGVINVV) threads the bilayer. The Vacuolar segment spans residues 175–210 (GNSLLPIFVKDSLKCQSQGAYEPDKVDSLTTVISGR). Residues 211 to 231 (GASLGYSSALIVQIVSMFLVA) traverse the membrane as a helical segment. Residues 232 to 241 (SKKGSKQDVQ) are Cytoplasmic-facing. Residues 242-262 (VAVLFVGIWWFVWQLPMIWLI) traverse the membrane as a helical segment. The Vacuolar segment spans residues 263 to 318 (DDVTIPIRADDSTLASARSPYPGEQDALGQLNWKNYLSYGWVSLFESFKHARLLKD). Ser-278 is subject to Phosphoserine. The helical transmembrane segment at 319–339 (VMIFLIAWFIISDSITTINST) threads the bilayer. The Cytoplasmic portion of the chain corresponds to 340–352 (AVLFSKAELHMST). A helical membrane pass occupies residues 353 to 373 (LNLIMISVLTVVNAMLGAFMI). Over 374 to 388 (PQFLATKFRWTSSQT) the chain is Vacuolar. Residues 389–409 (LMYIIIWASFIPFYGILGFFF) traverse the membrane as a helical segment. Over 410 to 417 (NAFGLKHK) the chain is Cytoplasmic. The helical transmembrane segment at 418-438 (FEMFLLAIWYGLSLGGLSAVS) threads the bilayer. Residues 439–485 (RSVFSLIVPPGKESTFFSMFSITDKGSSILGPFLVGLLTDKTHNIRY) lie on the Vacuolar side of the membrane. A helical transmembrane segment spans residues 486–506 (SFYFFFLLLMLSLPVLNCLDV). Residues 507–528 (KRGRREAEELSQVLPESERRLD) lie on the Cytoplasmic side of the membrane.

It belongs to the ATG22 family.

It localises to the vacuole membrane. In terms of biological role, vacuolar effluxer which mediate the efflux of amino acids resulting from autophagic degradation. The release of autophagic amino acids allows the maintenance of protein synthesis and viability during nitrogen starvation. This is Autophagy-related protein 22 (ATG22) from Saccharomyces cerevisiae (strain YJM789) (Baker's yeast).